The following is an 849-amino-acid chain: Membrane protein-large ribosomal subunit bL9 fusion protein (849 aa).

The unknown stretch occupies residues 1–680; the sequence is MFSKNKHNTK…TQLEGTNIKT (680 aa). A run of 2 helical transmembrane segments spans residues 11-31 and 64-84; these read FIVIACVIVVLILILFCLDFQ and IIFFIFNFFGKIILASFVISF. The region spanning 214–342 is the GGDEF domain; sequence KTLALAMITF…GGDQVVVNIE (129 aa). Residues 681–849 form a large ribosomal subunit protein bL9 region; the sequence is VTDTLKHFLK…FLNVTERKSK (169 aa).

It belongs to the bacterial ribosomal protein bL9 family.

The protein localises to the cell membrane. Binds to the 23S rRNA. This chain is Membrane protein-large ribosomal subunit bL9 fusion protein, found in Onion yellows phytoplasma (strain OY-M).